The primary structure comprises 121 residues: Small ribosomal subunit protein uS13 (121 aa).

Residues 91–121 are disordered; sequence HRRGLPVRGQNTKNNARTRKGPSKTVAGKKK. The segment covering 106-121 has biased composition (basic residues); that stretch reads ARTRKGPSKTVAGKKK.

It belongs to the universal ribosomal protein uS13 family. As to quaternary structure, part of the 30S ribosomal subunit. Forms a loose heterodimer with protein S19. Forms two bridges to the 50S subunit in the 70S ribosome.

In terms of biological role, located at the top of the head of the 30S subunit, it contacts several helices of the 16S rRNA. In the 70S ribosome it contacts the 23S rRNA (bridge B1a) and protein L5 of the 50S subunit (bridge B1b), connecting the 2 subunits; these bridges are implicated in subunit movement. Contacts the tRNAs in the A and P-sites. This Listeria monocytogenes serotype 4b (strain CLIP80459) protein is Small ribosomal subunit protein uS13.